The sequence spans 60 residues: Large ribosomal subunit protein uL30 (60 aa).

This sequence belongs to the universal ribosomal protein uL30 family. As to quaternary structure, part of the 50S ribosomal subunit.

In Nocardioides sp. (strain ATCC BAA-499 / JS614), this protein is Large ribosomal subunit protein uL30.